The following is a 141-amino-acid chain: Large ribosomal subunit protein uL16c (141 aa).

The segment covering 1–17 (MLSPKRTKYRKPHRGNR) has biased composition (basic residues). Residues 1–21 (MLSPKRTKYRKPHRGNRKGQA) are disordered.

The protein belongs to the universal ribosomal protein uL16 family. Part of the 50S ribosomal subunit.

The protein localises to the plastid. The protein resides in the chloroplast. In Ostreococcus tauri, this protein is Large ribosomal subunit protein uL16c.